Reading from the N-terminus, the 241-residue chain is Leucyl/phenylalanyl-tRNA--protein transferase (241 aa).

Belongs to the L/F-transferase family.

The protein resides in the cytoplasm. The enzyme catalyses N-terminal L-lysyl-[protein] + L-leucyl-tRNA(Leu) = N-terminal L-leucyl-L-lysyl-[protein] + tRNA(Leu) + H(+). It carries out the reaction N-terminal L-arginyl-[protein] + L-leucyl-tRNA(Leu) = N-terminal L-leucyl-L-arginyl-[protein] + tRNA(Leu) + H(+). It catalyses the reaction L-phenylalanyl-tRNA(Phe) + an N-terminal L-alpha-aminoacyl-[protein] = an N-terminal L-phenylalanyl-L-alpha-aminoacyl-[protein] + tRNA(Phe). Functionally, functions in the N-end rule pathway of protein degradation where it conjugates Leu, Phe and, less efficiently, Met from aminoacyl-tRNAs to the N-termini of proteins containing an N-terminal arginine or lysine. This is Leucyl/phenylalanyl-tRNA--protein transferase from Neisseria meningitidis serogroup B (strain ATCC BAA-335 / MC58).